An 88-amino-acid chain; its full sequence is Small cysteine and glycine repeat-containing protein 1 (88 aa).

The segment at 4–72 is 10 X 2 AA repeats of CG; the sequence is CGCGGCGGCG…TCSSCGYSCG (69 aa).

The protein belongs to the KRTAP type 28 family.

Functionally, in the hair cortex, hair keratin intermediate filaments are embedded in an interfilamentous matrix, consisting of hair keratin-associated proteins (KRTAP), which are essential for the formation of a rigid and resistant hair shaft through their extensive disulfide bond cross-linking with abundant cysteine residues of hair keratins. The matrix proteins include the high-sulfur and high-glycine-tyrosine keratins. The polypeptide is Small cysteine and glycine repeat-containing protein 1 (Homo sapiens (Human)).